We begin with the raw amino-acid sequence, 341 residues long: S-adenosylmethionine:tRNA ribosyltransferase-isomerase (341 aa).

Belongs to the QueA family. In terms of assembly, monomer.

It is found in the cytoplasm. It carries out the reaction 7-aminomethyl-7-carbaguanosine(34) in tRNA + S-adenosyl-L-methionine = epoxyqueuosine(34) in tRNA + adenine + L-methionine + 2 H(+). The protein operates within tRNA modification; tRNA-queuosine biosynthesis. Transfers and isomerizes the ribose moiety from AdoMet to the 7-aminomethyl group of 7-deazaguanine (preQ1-tRNA) to give epoxyqueuosine (oQ-tRNA). In Trichlorobacter lovleyi (strain ATCC BAA-1151 / DSM 17278 / SZ) (Geobacter lovleyi), this protein is S-adenosylmethionine:tRNA ribosyltransferase-isomerase.